The chain runs to 225 residues: Holliday junction branch migration complex subunit RuvA (225 aa).

The interval 1-68 (MIGWLQGQKV…DDGSSLFGFP (68 aa)) is domain I. Residues 69–147 (ERRERDMFRT…EFSCRDPGMS (79 aa)) form a domain II region. The segment at 148-158 (LVDNGVIDSHQ) is flexible linker. A domain III region spans residues 159–225 (LKDSSLHELQ…SLRWLSQEAA (67 aa)).

The protein belongs to the RuvA family. In terms of assembly, homotetramer. Forms an RuvA(8)-RuvB(12)-Holliday junction (HJ) complex. HJ DNA is sandwiched between 2 RuvA tetramers; dsDNA enters through RuvA and exits via RuvB. An RuvB hexamer assembles on each DNA strand where it exits the tetramer. Each RuvB hexamer is contacted by two RuvA subunits (via domain III) on 2 adjacent RuvB subunits; this complex drives branch migration. In the full resolvosome a probable DNA-RuvA(4)-RuvB(12)-RuvC(2) complex forms which resolves the HJ.

The protein resides in the cytoplasm. The RuvA-RuvB-RuvC complex processes Holliday junction (HJ) DNA during genetic recombination and DNA repair, while the RuvA-RuvB complex plays an important role in the rescue of blocked DNA replication forks via replication fork reversal (RFR). RuvA specifically binds to HJ cruciform DNA, conferring on it an open structure. The RuvB hexamer acts as an ATP-dependent pump, pulling dsDNA into and through the RuvAB complex. HJ branch migration allows RuvC to scan DNA until it finds its consensus sequence, where it cleaves and resolves the cruciform DNA. The sequence is that of Holliday junction branch migration complex subunit RuvA from Prochlorococcus marinus (strain MIT 9313).